The following is a 637-amino-acid chain: tRNA-dihydrouridine(47) synthase [NAD(P)(+)]-like (637 aa).

3 disordered regions span residues 1–21 (MAET…ACER), 41–63 (LDGD…EPGA), and 85–105 (ERQV…VKPA). The segment covering 89–104 (PKRARGQNKSRPHVKP) has biased composition (basic residues). 2 C3H1-type zinc fingers span residues 107–137 (YDKD…HDVG) and 145–175 (ADLG…HLGP). Thr-260 carries the phosphothreonine modification. A phosphoserine mark is found at Ser-263 and Ser-264. Residues 298–300 (PLT) and Gln-352 each bind FMN. Cys-383 serves as the catalytic Proton donor. A Glycyl lysine isopeptide (Lys-Gly) (interchain with G-Cter in SUMO2) cross-link involves residue Lys-403. FMN is bound by residues Lys-422, His-452, 484–486 (NGD), and 507–508 (AR).

It belongs to the Dus family. Dus3 subfamily. FMN is required as a cofactor.

It carries out the reaction 5,6-dihydrouridine(47) in tRNA + NAD(+) = uridine(47) in tRNA + NADH + H(+). The enzyme catalyses 5,6-dihydrouridine(47) in tRNA + NADP(+) = uridine(47) in tRNA + NADPH + H(+). The catalysed reaction is a 5,6-dihydrouridine in mRNA + NAD(+) = a uridine in mRNA + NADH + H(+). It catalyses the reaction a 5,6-dihydrouridine in mRNA + NADP(+) = a uridine in mRNA + NADPH + H(+). Its function is as follows. Catalyzes the synthesis of dihydrouridine, a modified base, in various RNAs, such as tRNAs, mRNAs and some long non-coding RNAs (lncRNAs). Mainly modifies the uridine in position 47 (U47) in the D-loop of most cytoplasmic tRNAs. Also able to mediate the formation of dihydrouridine in some mRNAs, thereby regulating their translation. This is tRNA-dihydrouridine(47) synthase [NAD(P)(+)]-like from Mus musculus (Mouse).